A 193-amino-acid chain; its full sequence is dCTP deaminase (193 aa).

Residues 110–115 (RSSLAR), D128, 136–138 (VLE), Y171, K178, and Q182 each bind dCTP. The Proton donor/acceptor role is filled by E138.

Belongs to the dCTP deaminase family. In terms of assembly, homotrimer.

The catalysed reaction is dCTP + H2O + H(+) = dUTP + NH4(+). Its pathway is pyrimidine metabolism; dUMP biosynthesis; dUMP from dCTP (dUTP route): step 1/2. Functionally, catalyzes the deamination of dCTP to dUTP. This is dCTP deaminase from Escherichia coli (strain K12 / MC4100 / BW2952).